The chain runs to 155 residues: MAPARAGCCPLLLLLLLGLWVAEIPVSAKPESMTPSQWFKTQDVQPSPQACDSAMRNINNYKKWCKDLNTFLHEPFSSVAATCQTPNITCKNGHKNCHQSHRPVSLTMCGLISGKYLNCKYKEEHQNKSYIVACDPPQQGDPEYPLVPVHLDKVV.

The N-terminal stretch at 1 to 28 is a signal peptide; it reads MAPARAGCCPLLLLLLLGLWVAEIPVSA. Disulfide bonds link Cys-65/Cys-119, Cys-83/Cys-134, and Cys-90/Cys-97. Residues 66-70 and Lys-91 contribute to the substrate site; that span reads KDLNT. The Proton donor role is filled by His-150.

It belongs to the pancreatic ribonuclease family.

Its subcellular location is the secreted. Functionally, has a low ribonuclease activity. In Saguinus oedipus (Cotton-top tamarin), this protein is Ribonuclease 8 (RNASE8).